Here is a 124-residue protein sequence, read N- to C-terminus: Large ribosomal subunit protein bL20c (124 aa).

Belongs to the bacterial ribosomal protein bL20 family.

The protein localises to the plastid. The protein resides in the chloroplast. In terms of biological role, binds directly to 23S ribosomal RNA and is necessary for the in vitro assembly process of the 50S ribosomal subunit. It is not involved in the protein synthesizing functions of that subunit. The chain is Large ribosomal subunit protein bL20c from Stigeoclonium helveticum (Green alga).